Reading from the N-terminus, the 151-residue chain is Large ribosomal subunit protein bL9 (151 aa).

This sequence belongs to the bacterial ribosomal protein bL9 family.

Functionally, binds to the 23S rRNA. In Acidobacterium capsulatum (strain ATCC 51196 / DSM 11244 / BCRC 80197 / JCM 7670 / NBRC 15755 / NCIMB 13165 / 161), this protein is Large ribosomal subunit protein bL9.